Consider the following 466-residue polypeptide: Asparagine--tRNA ligase (466 aa).

This sequence belongs to the class-II aminoacyl-tRNA synthetase family. Homodimer.

The protein localises to the cytoplasm. The catalysed reaction is tRNA(Asn) + L-asparagine + ATP = L-asparaginyl-tRNA(Asn) + AMP + diphosphate + H(+). The protein is Asparagine--tRNA ligase of Shewanella baltica (strain OS155 / ATCC BAA-1091).